A 377-amino-acid polypeptide reads, in one-letter code: Terpene synthase 1 (377 aa).

Residues 81 to 86 (DDALDA) carry the DDxx(x)D/E motif motif. Residues 221-229 (NDLVSYEKE) carry the NDxxSxxxD/E motif motif. Positions 326-359 (RKQSSSPNLTNSISIPTNNTNNSNNITSSPNKKQ) are disordered. The segment covering 335–356 (TNSISIPTNNTNNSNNITSSPN) has biased composition (low complexity).

This sequence belongs to the terpene synthase family.

It catalyses the reaction (2E,6E)-farnesyl diphosphate = (2S,3R,6S,9S)-(-)-protoillud-7-ene + diphosphate. Its function is as follows. Terpene synthase that converts its substrate farnesyl diphosphate (FPP) into the sesquiterpene protoillud-7-ene. The sequence is that of Terpene synthase 1 from Dictyostelium purpureum (Slime mold).